The chain runs to 123 residues: Ribosome-binding factor A (123 aa).

Belongs to the RbfA family. As to quaternary structure, monomer. Binds 30S ribosomal subunits, but not 50S ribosomal subunits or 70S ribosomes.

The protein resides in the cytoplasm. In terms of biological role, one of several proteins that assist in the late maturation steps of the functional core of the 30S ribosomal subunit. Associates with free 30S ribosomal subunits (but not with 30S subunits that are part of 70S ribosomes or polysomes). Required for efficient processing of 16S rRNA. May interact with the 5'-terminal helix region of 16S rRNA. The polypeptide is Ribosome-binding factor A (Neisseria gonorrhoeae (strain NCCP11945)).